A 178-amino-acid chain; its full sequence is Cytochrome b6-f complex iron-sulfur subunit (178 aa).

The chain crosses the membrane as a helical span at residues Leu20–Met42. The region spanning Lys65–Val161 is the Rieske domain. [2Fe-2S] cluster-binding residues include Cys107, His109, Cys125, and His128. A disulfide bridge connects residues Cys112 and Cys127.

Belongs to the Rieske iron-sulfur protein family. As to quaternary structure, the 4 large subunits of the cytochrome b6-f complex are cytochrome b6, subunit IV (17 kDa polypeptide, PetD), cytochrome f and the Rieske protein, while the 4 small subunits are PetG, PetL, PetM and PetN. The complex functions as a dimer. [2Fe-2S] cluster is required as a cofactor.

It is found in the cellular thylakoid membrane. It carries out the reaction 2 oxidized [plastocyanin] + a plastoquinol + 2 H(+)(in) = 2 reduced [plastocyanin] + a plastoquinone + 4 H(+)(out). Its function is as follows. Component of the cytochrome b6-f complex, which mediates electron transfer between photosystem II (PSII) and photosystem I (PSI), cyclic electron flow around PSI, and state transitions. This chain is Cytochrome b6-f complex iron-sulfur subunit, found in Prochlorococcus marinus (strain MIT 9301).